The sequence spans 376 residues: Protein RecA (376 aa).

An ATP-binding site is contributed by glycine 78–threonine 85. A disordered region spans residues proline 355 to aspartate 376. Over residues aspartate 363–aspartate 376 the composition is skewed to acidic residues.

Belongs to the RecA family.

It is found in the cytoplasm. Its function is as follows. Can catalyze the hydrolysis of ATP in the presence of single-stranded DNA, the ATP-dependent uptake of single-stranded DNA by duplex DNA, and the ATP-dependent hybridization of homologous single-stranded DNAs. It interacts with LexA causing its activation and leading to its autocatalytic cleavage. The protein is Protein RecA of Corynebacterium glutamicum (strain R).